We begin with the raw amino-acid sequence, 82 residues long: uncharacterized protein (82 aa).

Residues 55–64 (DQNTAPSTPS) show a composition bias toward polar residues. A disordered region spans residues 55 to 82 (DQNTAPSTPSKILPKRLPSQSNLNNNNN).

This is an uncharacterized protein from Dictyostelium discoideum (Social amoeba).